A 419-amino-acid polypeptide reads, in one-letter code: Histidine--tRNA ligase (419 aa).

This sequence belongs to the class-II aminoacyl-tRNA synthetase family. As to quaternary structure, homodimer.

The protein resides in the cytoplasm. The catalysed reaction is tRNA(His) + L-histidine + ATP = L-histidyl-tRNA(His) + AMP + diphosphate + H(+). The chain is Histidine--tRNA ligase from Trichlorobacter lovleyi (strain ATCC BAA-1151 / DSM 17278 / SZ) (Geobacter lovleyi).